A 201-amino-acid polypeptide reads, in one-letter code: GTP-binding protein ryh1 (201 aa).

18 to 25 is a binding site for GTP; that stretch reads GEQSVGKT. The short motif at 40–48 is the Effector region element; that stretch reads YQATIGIDF. Residues 66–70 and 124–127 each bind GTP; these read DTAGQ and NKTD. Residues Cys199 and Cys201 are each lipidated (S-geranylgeranyl cysteine). Cys201 is subject to Cysteine methyl ester.

This sequence belongs to the small GTPase superfamily. Rab family.

It is found in the endosome membrane. The protein localises to the golgi apparatus membrane. The protein resides in the nucleus. It localises to the cytoplasm. Its subcellular location is the cytosol. Has a role in retrograde traffricking of proteins from the endosome to the Golgi. Involved in protein transport to the plasma membrane. Involved in the secretory pathway where it has a role in acid phosphatase secretion. Required also in normal glycosylation trafficking pathways. This Schizosaccharomyces pombe (strain 972 / ATCC 24843) (Fission yeast) protein is GTP-binding protein ryh1 (ryh1).